The sequence spans 313 residues: Ribonuclease Z (313 aa).

Histidine 62, histidine 64, aspartate 66, histidine 67, histidine 142, aspartate 212, and histidine 270 together coordinate Zn(2+). Aspartate 66 acts as the Proton acceptor in catalysis.

It belongs to the RNase Z family. In terms of assembly, homodimer. Zn(2+) is required as a cofactor.

It carries out the reaction Endonucleolytic cleavage of RNA, removing extra 3' nucleotides from tRNA precursor, generating 3' termini of tRNAs. A 3'-hydroxy group is left at the tRNA terminus and a 5'-phosphoryl group is left at the trailer molecule.. Functionally, zinc phosphodiesterase, which displays some tRNA 3'-processing endonuclease activity. Probably involved in tRNA maturation, by removing a 3'-trailer from precursor tRNA. In Cytophaga hutchinsonii (strain ATCC 33406 / DSM 1761 / CIP 103989 / NBRC 15051 / NCIMB 9469 / D465), this protein is Ribonuclease Z.